Reading from the N-terminus, the 429-residue chain is 3-phosphoshikimate 1-carboxyvinyltransferase (429 aa).

Positions 25, 26, and 30 each coordinate 3-phosphoshikimate. Lys-25 is a phosphoenolpyruvate binding site. Phosphoenolpyruvate contacts are provided by Gly-99 and Arg-127. Residues Ser-173, Ser-174, Gln-175, Ser-201, Asp-317, Asn-340, and Lys-344 each contribute to the 3-phosphoshikimate site. Residue Gln-175 coordinates phosphoenolpyruvate. Residue Asp-317 is the Proton acceptor of the active site. Phosphoenolpyruvate is bound by residues Arg-348, Arg-390, and Lys-415.

This sequence belongs to the EPSP synthase family. In terms of assembly, monomer.

The protein localises to the cytoplasm. The catalysed reaction is 3-phosphoshikimate + phosphoenolpyruvate = 5-O-(1-carboxyvinyl)-3-phosphoshikimate + phosphate. It participates in metabolic intermediate biosynthesis; chorismate biosynthesis; chorismate from D-erythrose 4-phosphate and phosphoenolpyruvate: step 6/7. Functionally, catalyzes the transfer of the enolpyruvyl moiety of phosphoenolpyruvate (PEP) to the 5-hydroxyl of shikimate-3-phosphate (S3P) to produce enolpyruvyl shikimate-3-phosphate and inorganic phosphate. This Pseudoalteromonas atlantica (strain T6c / ATCC BAA-1087) protein is 3-phosphoshikimate 1-carboxyvinyltransferase.